Consider the following 508-residue polypeptide: Dihydroniloticin synthase CYP71CD4 (508 aa).

Residues 6–26 traverse the membrane as a helical segment; it reads LDFFSVTSFIIFFLFLFRLVW. Position 449 (Cys-449) interacts with heme.

It belongs to the cytochrome P450 family. Requires heme as cofactor. Mainly expressed in roots and, to a lesser extent, in stems.

It localises to the membrane. It catalyses the reaction tirucalla-7,24-dien-3beta-ol + 2 reduced [NADPH--hemoprotein reductase] + 2 O2 = dihydroniloticin + 2 oxidized [NADPH--hemoprotein reductase] + 2 H2O + 2 H(+). The protein operates within secondary metabolite biosynthesis; terpenoid biosynthesis. Functionally, monooxygenase involved in the biosynthesis of quassinoids triterpene natural products such as ailanthone, chaparrinone, glaucarubinone and amarolide, allelopathic degraded triterpene lactones inhibiting the growth of other plants, and possessing antimalarial, antifeedant, insecticidal, anti-inflammatory and anticancer activities. Catalyzes the conversion of tirucalladienol to dihydroniloticin. The sequence is that of Dihydroniloticin synthase CYP71CD4 from Ailanthus altissima (Tree-of-heaven).